We begin with the raw amino-acid sequence, 101 residues long: MSTIADPRDILLAPVISEKSYGLIEEGTYTFLVHPDSNKTQIKIAVEKVFGVKVTSVNTANRQGKRKRTRFGYGKRKDTKRALVTLSADSKPIEIFGGPVA.

This sequence belongs to the universal ribosomal protein uL23 family. As to quaternary structure, part of the 50S ribosomal subunit. Contacts protein L29, and trigger factor when it is bound to the ribosome.

In terms of biological role, one of the early assembly proteins it binds 23S rRNA. One of the proteins that surrounds the polypeptide exit tunnel on the outside of the ribosome. Forms the main docking site for trigger factor binding to the ribosome. In Rhodococcus erythropolis (strain PR4 / NBRC 100887), this protein is Large ribosomal subunit protein uL23.